The chain runs to 691 residues: Glycine--tRNA ligase beta subunit (691 aa).

Belongs to the class-II aminoacyl-tRNA synthetase family. In terms of assembly, tetramer of two alpha and two beta subunits.

It localises to the cytoplasm. It catalyses the reaction tRNA(Gly) + glycine + ATP = glycyl-tRNA(Gly) + AMP + diphosphate. The polypeptide is Glycine--tRNA ligase beta subunit (Buchnera aphidicola subsp. Schizaphis graminum (strain Sg)).